Reading from the N-terminus, the 277-residue chain is Putative phosphoenolpyruvate synthase regulatory protein (277 aa).

157 to 164 (GVSRCGKT) is a binding site for ADP.

The protein belongs to the pyruvate, phosphate/water dikinase regulatory protein family. PSRP subfamily.

It carries out the reaction [pyruvate, water dikinase] + ADP = [pyruvate, water dikinase]-phosphate + AMP + H(+). The enzyme catalyses [pyruvate, water dikinase]-phosphate + phosphate + H(+) = [pyruvate, water dikinase] + diphosphate. Its function is as follows. Bifunctional serine/threonine kinase and phosphorylase involved in the regulation of the phosphoenolpyruvate synthase (PEPS) by catalyzing its phosphorylation/dephosphorylation. The polypeptide is Putative phosphoenolpyruvate synthase regulatory protein (Citrobacter koseri (strain ATCC BAA-895 / CDC 4225-83 / SGSC4696)).